We begin with the raw amino-acid sequence, 164 residues long: MQCLGKIFLSPGTKPESKNLIVIIFTADRDQRVLALSRIVKRPFFNKNPMPAMSQILDPIPNNQPSALFCCYVNATNQIQVARITNVPNWYFERVVFPGQRLVFEAVPSAQLEIHTGMMASSIISDTIPCEQLSIDPDGLAAGGFISPEKEHESEDMTSQSLVA.

The interval 144-164 (GFISPEKEHESEDMTSQSLVA) is disordered.

This is an uncharacterized protein from Synechocystis sp. (strain ATCC 27184 / PCC 6803 / Kazusa).